Reading from the N-terminus, the 202-residue chain is Histone chaperone ASF1B (202 aa).

The tract at residues 1–155 (MAKVSVLNVA…VTRFHINWDN (155 aa)) is interaction with CHAF1B. The segment at 1 to 156 (MAKVSVLNVA…TRFHINWDNN (156 aa)) is interaction with histone H3. At S198 the chain carries Phosphoserine; by TLK2.

This sequence belongs to the ASF1 family. Interacts with histone H3 (via C-terminus), including histone H3.1, H3.2 and H3.3, and histone H4; the interaction with H3 is direct. Interacts with the CHAF1A, CHAF1B and RBBP4 subunits of the CAF-1 complex. Interacts with HAT1, NASP and TAF1. Found in a soluble complex with NASP and histones H3 and H4; the interaction with NASP is probably indirect and mediated by H3-H4. Interacts with CDAN1. Found in a cytosolic complex with IPO4 and histones H3 and H4. Interacts with CREBBP. Post-translationally, phosphorylated by TLK1 and TLK2. Highly expressed in testis and at lower levels in colon, small intestine and thymus.

It localises to the nucleus. The protein localises to the cytoplasm. The protein resides in the cytosol. Its function is as follows. Histone chaperone that facilitates histone deposition and histone exchange and removal during nucleosome assembly and disassembly. Cooperates with chromatin assembly factor 1 (CAF-1) to promote replication-dependent chromatin assembly. Also involved in the nuclear import of the histone H3-H4 dimer together with importin-4 (IPO4): specifically recognizes and binds newly synthesized histones with the monomethylation of H3 'Lys-9' (H3K9me1) and diacetylation at 'Lys-5' and 'Lys-12' of H4 (H4K5K12ac) marks in the cytosol. Does not participate in replication-independent nucleosome deposition which is mediated by ASF1A and HIRA. Required for gonad development. In Homo sapiens (Human), this protein is Histone chaperone ASF1B.